The following is a 476-amino-acid chain: Inactive glucose-1-phosphate adenylyltransferase small subunit 2, chloroplastic (476 aa).

The N-terminal 55 residues, 1-55 (MQISSSSFITKFTNLHMVRSTSDHHQWRHNYNLKQLFIPNLSVSNSQHLPLNQSV), are a transit peptide targeting the chloroplast.

This sequence belongs to the bacterial/plant glucose-1-phosphate adenylyltransferase family. As to quaternary structure, heterotetramer. As to expression, expressed at very low levels in leaves, inflorescences, fruits, and roots.

Its subcellular location is the plastid. It localises to the chloroplast. This chain is Inactive glucose-1-phosphate adenylyltransferase small subunit 2, chloroplastic, found in Arabidopsis thaliana (Mouse-ear cress).